Consider the following 729-residue polypeptide: Elongation factor 2 (729 aa).

A tr-type G domain is found at 19-262 (EQIRNIAIAA…MVCEHFPNPV (244 aa)). GTP contacts are provided by residues 28-35 (AHVDHGKT), 94-98 (DTPGH), and 148-151 (NKVD). A Diphthamide modification is found at His-597.

It belongs to the TRAFAC class translation factor GTPase superfamily. Classic translation factor GTPase family. EF-G/EF-2 subfamily.

Its subcellular location is the cytoplasm. Catalyzes the GTP-dependent ribosomal translocation step during translation elongation. During this step, the ribosome changes from the pre-translocational (PRE) to the post-translocational (POST) state as the newly formed A-site-bound peptidyl-tRNA and P-site-bound deacylated tRNA move to the P and E sites, respectively. Catalyzes the coordinated movement of the two tRNA molecules, the mRNA and conformational changes in the ribosome. The chain is Elongation factor 2 from Natronomonas pharaonis (strain ATCC 35678 / DSM 2160 / CIP 103997 / JCM 8858 / NBRC 14720 / NCIMB 2260 / Gabara) (Halobacterium pharaonis).